The primary structure comprises 381 residues: E3 ubiquitin-protein ligase Fancl (381 aa).

Residues 110–293 (NIYYDILALY…MFDLCYFPMP (184 aa)) form a UBC-RWD region (URD) region. Residues 303–374 (EEDNEELRCN…PFCKAKLSTS (72 aa)) form an RING-CH-type; degenerate zinc finger. Zn(2+)-binding residues include Cys-311, Cys-314, Cys-329, Cys-334, His-339, Cys-342, Cys-364, and Cys-367.

Interacts (via C-terminus) with FANCI and Fancd2.

Its subcellular location is the nucleus. The enzyme catalyses S-ubiquitinyl-[E2 ubiquitin-conjugating enzyme]-L-cysteine + [acceptor protein]-L-lysine = [E2 ubiquitin-conjugating enzyme]-L-cysteine + N(6)-ubiquitinyl-[acceptor protein]-L-lysine.. The protein operates within protein modification; protein ubiquitination. Functionally, ubiquitin ligase protein that mediates monoubiquitination of Fancd2. Ubiquitination of Fancd2 is stimulated by ionising radiation. Together with Fancd2, and probably FANCI, involved in DNA repair of damage caused by agents that induce interstrand cross-links but not agents that cause double strand breaks. The sequence is that of E3 ubiquitin-protein ligase Fancl from Drosophila melanogaster (Fruit fly).